An 861-amino-acid polypeptide reads, in one-letter code: Xylan 1,4-beta-xylosidase (861 aa).

An N-terminal signal peptide occupies residues 1-19 (MKYQLFLSLALCVGLGASA). The active-site Nucleophile is the D269. Residues 458–600 (DGKKGLKGTF…DYQETIAQLK (143 aa)) enclose the PA14 domain. Catalysis depends on E616, which acts as the Proton donor/acceptor.

This sequence belongs to the glycosyl hydrolase 3 family. As to quaternary structure, exists as a large polymeric species, presumably as a homononamer.

It carries out the reaction Hydrolysis of (1-&gt;4)-beta-D-xylans, to remove successive D-xylose residues from the non-reducing termini.. The enzyme catalyses Hydrolysis of terminal non-reducing alpha-L-arabinofuranoside residues in alpha-L-arabinosides.. It participates in glycan degradation; xylan degradation. Functionally, involved in degradation of plant cell wall polysaccharides. Has beta-xylosidase activity via its capacity to hydrolyze glycosidic linkages of beta-1,4-xylo-oligosaccharides of various lengths (X2 to X6), releasing xylose monomers. To a much lesser extent, also has alpha-L-arabinofuranosidase activity. Does not possess beta-D-glucosidase activity. Acts synergistically with Xyn10D-Fae1A to increase the release of xylose from xylan. In Xylanibacter ruminicola (strain ATCC 19189 / DSM 19721 / CIP 105475 / JCM 8958 / 23) (Prevotella ruminicola), this protein is Xylan 1,4-beta-xylosidase.